The chain runs to 236 residues: Ribose-5-phosphate isomerase (236 aa).

Substrate is bound by residues 27 to 30 (TGST), 84 to 87 (DGTD), and 97 to 100 (KGRG). Glutamate 106 acts as the Proton acceptor in catalysis. Lysine 124 is a binding site for substrate.

Belongs to the ribose 5-phosphate isomerase family. As to quaternary structure, homodimer.

The catalysed reaction is aldehydo-D-ribose 5-phosphate = D-ribulose 5-phosphate. It participates in carbohydrate degradation; pentose phosphate pathway; D-ribose 5-phosphate from D-ribulose 5-phosphate (non-oxidative stage): step 1/1. Involved in the first step of the non-oxidative branch of the pentose phosphate pathway. It catalyzes the reversible conversion of ribose-5-phosphate to ribulose 5-phosphate. The polypeptide is Ribose-5-phosphate isomerase (Plasmodium falciparum (isolate 3D7)).